We begin with the raw amino-acid sequence, 874 residues long: Bifunctional apolipoprotein N-acyltransferase/polyprenol monophosphomannose synthase (874 aa).

Residues 1–593 (MKLGAWVAAQ…GRHRATSRSY (593 aa)) are apolipoprotein N-acyltransferase. 5 helical membrane-spanning segments follow: residues 23–42 (TRLV…FPPR), 72–89 (YGLL…PWIG), 94–115 (PGPW…GLFA), 177–194 (VALV…IEKW), and 206–223 (AVVL…AAIV). A CN hydrolase domain is found at 241–497 (VTVAVVQGNV…PAYLDSQVRL (257 aa)). Catalysis depends on Glu294, which acts as the Proton acceptor. The active site involves Lys359. Cys409 functions as the Nucleophile in the catalytic mechanism. Residues 509-526 (PILQWILVGAAAAVVLVA) form a helical membrane-spanning segment. 2 disordered regions span residues 533–609 (FPRP…NRPS) and 852–874 (RARP…DVTE). Residues 594–874 (MTTGQPAPPA…SRVSRADVTE (281 aa)) form a polyprenol monophosphomannose synthase region.

In the N-terminal section; belongs to the CN hydrolase family. Apolipoprotein N-acyltransferase subfamily. This sequence in the C-terminal section; belongs to the glycosyltransferase 2 family.

The protein resides in the cell membrane. The enzyme catalyses N-terminal S-1,2-diacyl-sn-glyceryl-L-cysteinyl-[lipoprotein] + a glycerophospholipid = N-acyl-S-1,2-diacyl-sn-glyceryl-L-cysteinyl-[lipoprotein] + a 2-acyl-sn-glycero-3-phospholipid + H(+). It catalyses the reaction a di-trans,poly-cis-dolichyl phosphate + GDP-alpha-D-mannose = a di-trans,poly-cis-dolichyl beta-D-mannosyl phosphate + GDP. It functions in the pathway protein modification; lipoprotein biosynthesis (N-acyl transfer). In terms of biological role, catalyzes the phospholipid dependent N-acylation of the N-terminal cysteine of apolipoprotein, the last step in lipoprotein maturation. Transfers mannose from GDP-mannose to lipid acceptors to form polyprenol monophosphomannose (PPM). PMM is an alkai-stable sugar donor which adds mannose-phosphate residues to triacylated-phosphatidyl-myo-inositol mannosides (PIM2), eventually leading to generation of the cell wall glycolipid lipoglycan modulins lipoarabinomannan (LAM) and lipomannan (LM). The polypeptide is Bifunctional apolipoprotein N-acyltransferase/polyprenol monophosphomannose synthase (Mycobacterium bovis (strain BCG / Pasteur 1173P2)).